The chain runs to 343 residues: Methionine import ATP-binding protein MetN (343 aa).

In terms of domain architecture, ABC transporter spans 2–241; the sequence is IKLSNITKVF…PKTPLAQKFI (240 aa). Residue 38–45 participates in ATP binding; the sequence is GASGAGKS.

It belongs to the ABC transporter superfamily. Methionine importer (TC 3.A.1.24) family. The complex is composed of two ATP-binding proteins (MetN), two transmembrane proteins (MetI) and a solute-binding protein (MetQ).

It is found in the cell inner membrane. The enzyme catalyses L-methionine(out) + ATP + H2O = L-methionine(in) + ADP + phosphate + H(+). The catalysed reaction is D-methionine(out) + ATP + H2O = D-methionine(in) + ADP + phosphate + H(+). Part of the ABC transporter complex MetNIQ involved in methionine import. Responsible for energy coupling to the transport system. The polypeptide is Methionine import ATP-binding protein MetN (Escherichia coli O157:H7).